The sequence spans 354 residues: Quinone-reactive Ni/Fe-hydrogenase small chain (354 aa).

A signal peptide (tat-type signal) is located at residues 1 to 36; that stretch reads MLEEKGIERRDFMKWAGAMTAMLSLPATFTPLTAKA. The [4Fe-4S] cluster site is built by cysteine 53, cysteine 56, cysteine 153, cysteine 186, histidine 224, cysteine 227, cysteine 252, and cysteine 258. [3Fe-4S] cluster contacts are provided by cysteine 267, cysteine 286, and cysteine 289.

Belongs to the [NiFe]/[NiFeSe] hydrogenase small subunit family. As to quaternary structure, heterodimer of a large and a small subunit. Requires [4Fe-4S] cluster as cofactor. [3Fe-4S] cluster serves as cofactor. Predicted to be exported by the Tat system. The position of the signal peptide cleavage has been experimentally proven.

The protein localises to the cell membrane. It catalyses the reaction H2 + a menaquinone = a menaquinol. This Wolinella succinogenes (strain ATCC 29543 / DSM 1740 / CCUG 13145 / JCM 31913 / LMG 7466 / NCTC 11488 / FDC 602W) (Vibrio succinogenes) protein is Quinone-reactive Ni/Fe-hydrogenase small chain (hydA).